The primary structure comprises 384 residues: Secreted effector protein EspF(U) (384 aa).

6 tandem repeats follow at residues 96–142 (IXPA…AEHG), 143–189 (IQPA…AEHG), 190–236 (IQPA…AEHG), 237–283 (IZPA…AEHG), 284–330 (IQPA…AEHG), and 331–377 (IQPA…AEHG). The 6 X 48 AA approximate tandem repeats stretch occupies residues 96–377 (IXPARSMAEH…RLMQHLAEHG (282 aa)). The disordered stretch occupies residues 247-266 (IPPAPNWPAPPPPVQNEQSR). The span at 248 to 260 (PPAPNWPAPPPPV) shows a compositional bias: pro residues.

It belongs to the EspF(U)/TccP family. In terms of assembly, interacts with host BAIAP2 and host WASL/N-WASP. Can also interact with host proteins BAIAP2L1 and WAS/WASP.

It is found in the secreted. It localises to the host cytoplasm. Its function is as follows. Required for efficient pedestal formation in host epithelial cells during infection. Acts as an intermediate between Tir (via host BAIAP2) and host WASL/N-WASP. Directly binds and activates WASL/N-WASP, which stimulates actin polymerization and leads to the formation of actin pedestals at the sites of bacterial adhesion. The protein is Secreted effector protein EspF(U) (espF(U)) of Escherichia coli O157:H7.